Here is a 103-residue protein sequence, read N- to C-terminus: Cell division topological specificity factor (103 aa).

This sequence belongs to the MinE family.

Prevents the cell division inhibition by proteins MinC and MinD at internal division sites while permitting inhibition at polar sites. This ensures cell division at the proper site by restricting the formation of a division septum at the midpoint of the long axis of the cell. The sequence is that of Cell division topological specificity factor from Prochlorococcus marinus (strain MIT 9211).